A 675-amino-acid chain; its full sequence is Acetyl-coenzyme A synthetase 2 (675 aa).

CoA-binding positions include 206 to 209 (RGGK) and Thr325. ATP contacts are provided by residues 401-403 (GEP), 425-430 (DTMWQT), Asp516, and Arg531. CoA is bound at residue Ser539. Residue Arg542 coordinates ATP. Residue Arg604 coordinates CoA.

The protein belongs to the ATP-dependent AMP-binding enzyme family.

The enzyme catalyses acetate + ATP + CoA = acetyl-CoA + AMP + diphosphate. This is Acetyl-coenzyme A synthetase 2 (ACS2) from Zygosaccharomyces bailii.